Consider the following 424-residue polypeptide: Histidinol dehydrogenase (424 aa).

NAD(+)-binding residues include Tyr127, Gln188, and Asn211. Residues Ser234, Gln256, and His259 each coordinate substrate. The Zn(2+) site is built by Gln256 and His259. Active-site proton acceptor residues include Glu322 and His323. His323, Asp356, Glu410, and His415 together coordinate substrate. Asp356 serves as a coordination point for Zn(2+). Residue His415 coordinates Zn(2+).

The protein belongs to the histidinol dehydrogenase family. It depends on Zn(2+) as a cofactor.

The enzyme catalyses L-histidinol + 2 NAD(+) + H2O = L-histidine + 2 NADH + 3 H(+). The protein operates within amino-acid biosynthesis; L-histidine biosynthesis; L-histidine from 5-phospho-alpha-D-ribose 1-diphosphate: step 9/9. Functionally, catalyzes the sequential NAD-dependent oxidations of L-histidinol to L-histidinaldehyde and then to L-histidine. The polypeptide is Histidinol dehydrogenase (Methanococcus maripaludis (strain DSM 14266 / JCM 13030 / NBRC 101832 / S2 / LL)).